The following is a 509-amino-acid chain: Methionine--tRNA ligase (509 aa).

The 'HIGH' region signature appears at 12–22 (YYPSGDLHLGH). The 'KMSKS' region motif lies at 302-306 (KMSKS). ATP is bound at residue Lys-305.

This sequence belongs to the class-I aminoacyl-tRNA synthetase family. MetG type 2B subfamily. Monomer.

It localises to the cytoplasm. It catalyses the reaction tRNA(Met) + L-methionine + ATP = L-methionyl-tRNA(Met) + AMP + diphosphate. Functionally, is required not only for elongation of protein synthesis but also for the initiation of all mRNA translation through initiator tRNA(fMet) aminoacylation. The sequence is that of Methionine--tRNA ligase (metG) from Mycoplasmopsis pulmonis (strain UAB CTIP) (Mycoplasma pulmonis).